We begin with the raw amino-acid sequence, 430 residues long: Glutamate-1-semialdehyde 2,1-aminomutase (430 aa).

Lys-265 carries the post-translational modification N6-(pyridoxal phosphate)lysine.

It belongs to the class-III pyridoxal-phosphate-dependent aminotransferase family. HemL subfamily. Homodimer. It depends on pyridoxal 5'-phosphate as a cofactor.

The protein resides in the cytoplasm. The catalysed reaction is (S)-4-amino-5-oxopentanoate = 5-aminolevulinate. It participates in porphyrin-containing compound metabolism; protoporphyrin-IX biosynthesis; 5-aminolevulinate from L-glutamyl-tRNA(Glu): step 2/2. The polypeptide is Glutamate-1-semialdehyde 2,1-aminomutase (Helicobacter pylori (strain Shi470)).